The chain runs to 257 residues: tRNA pseudouridine synthase A (257 aa).

The Nucleophile role is filled by D52. Y111 serves as a coordination point for substrate.

The protein belongs to the tRNA pseudouridine synthase TruA family. In terms of assembly, homodimer.

The enzyme catalyses uridine(38/39/40) in tRNA = pseudouridine(38/39/40) in tRNA. In terms of biological role, formation of pseudouridine at positions 38, 39 and 40 in the anticodon stem and loop of transfer RNAs. This Dinoroseobacter shibae (strain DSM 16493 / NCIMB 14021 / DFL 12) protein is tRNA pseudouridine synthase A.